The primary structure comprises 420 residues: UDP-N-acetylglucosamine 1-carboxyvinyltransferase (420 aa).

Lysine 22 to asparagine 23 contacts phosphoenolpyruvate. Arginine 93 serves as a coordination point for UDP-N-acetyl-alpha-D-glucosamine. Residue cysteine 117 is the Proton donor of the active site. Cysteine 117 is modified (2-(S-cysteinyl)pyruvic acid O-phosphothioketal). UDP-N-acetyl-alpha-D-glucosamine is bound by residues aspartate 307 and isoleucine 329.

It belongs to the EPSP synthase family. MurA subfamily.

The protein localises to the cytoplasm. It catalyses the reaction phosphoenolpyruvate + UDP-N-acetyl-alpha-D-glucosamine = UDP-N-acetyl-3-O-(1-carboxyvinyl)-alpha-D-glucosamine + phosphate. The protein operates within cell wall biogenesis; peptidoglycan biosynthesis. Its function is as follows. Cell wall formation. Adds enolpyruvyl to UDP-N-acetylglucosamine. This is UDP-N-acetylglucosamine 1-carboxyvinyltransferase from Cellvibrio japonicus (strain Ueda107) (Pseudomonas fluorescens subsp. cellulosa).